The following is a 190-amino-acid chain: uncharacterized protein (190 aa).

Residues 1-185 (MITMFKIVRG…LALETIGLGD (185 aa)) enclose the Macro domain.

This is an uncharacterized protein from Pyrococcus horikoshii (strain ATCC 700860 / DSM 12428 / JCM 9974 / NBRC 100139 / OT-3).